Reading from the N-terminus, the 58-residue chain is UPF0339 protein Msl4696 (58 aa).

Belongs to the UPF0339 family.

This chain is UPF0339 protein Msl4696, found in Mesorhizobium japonicum (strain LMG 29417 / CECT 9101 / MAFF 303099) (Mesorhizobium loti (strain MAFF 303099)).